The sequence spans 865 residues: Protein translocase subunit SecA (865 aa).

ATP is bound by residues Q85, 103–107 (GEGKT), and D505. Residues C847, C849, C858, and H859 each coordinate Zn(2+).

Belongs to the SecA family. Monomer and homodimer. Part of the essential Sec protein translocation apparatus which comprises SecA, SecYEG and auxiliary proteins SecDF. Other proteins may also be involved. Zn(2+) is required as a cofactor.

Its subcellular location is the cell membrane. It is found in the cytoplasm. It catalyses the reaction ATP + H2O + cellular proteinSide 1 = ADP + phosphate + cellular proteinSide 2.. Part of the Sec protein translocase complex. Interacts with the SecYEG preprotein conducting channel. Has a central role in coupling the hydrolysis of ATP to the transfer of proteins into and across the cell membrane, serving as an ATP-driven molecular motor driving the stepwise translocation of polypeptide chains across the membrane. This chain is Protein translocase subunit SecA, found in Lactococcus lactis subsp. cremoris (strain MG1363).